The chain runs to 179 residues: UPF0303 protein P4H10.12 (179 aa).

Belongs to the UPF0303 family.

This chain is UPF0303 protein P4H10.12, found in Schizosaccharomyces pombe (strain 972 / ATCC 24843) (Fission yeast).